Here is a 450-residue protein sequence, read N- to C-terminus: C4-dicarboxylate transport protein (450 aa).

Transmembrane regions (helical) follow at residues 25–45, 56–76, 90–110, 162–182, 200–220, 234–254, 319–339, and 367–387; these read VVFA…YGAA, LIKM…IASM, MAYF…VANV, ILQV…VGDA, LVNI…AFTI, LVLT…GAVA, IYMT…LTLG, and AATL…ILGV.

Belongs to the dicarboxylate/amino acid:cation symporter (DAACS) (TC 2.A.23) family.

It is found in the cell inner membrane. Functionally, responsible for the transport of dicarboxylates such as succinate, fumarate, and malate from the periplasm across the membrane. The chain is C4-dicarboxylate transport protein from Acidovorax ebreus (strain TPSY) (Diaphorobacter sp. (strain TPSY)).